The following is a 318-amino-acid chain: Mitochondrial thiamine pyrophosphate carrier (318 aa).

3 Solcar repeats span residues 13–106, 116–202, and 214–309; these read ISNV…LTEL, RDFS…LKRA, and NGNF…FCNF. A helical transmembrane segment spans residues 19–39; it reads AVAGSVSGLVTRVLISPLDVI. Ser-51 carries the post-translational modification Phosphoserine. A run of 4 helical transmembrane segments spans residues 87-107, 122-142, 173-193, and 220-240; these read LLSIGYGAVQFLSFEALTELV, FLCGGLSACVATLAVHPVDVL, VFYKGLNPTLIAIFPYAGFQF, and LLCGSGAGVISKTLTYPLDLF. Residues 241–246 carry the Substrate recognition motif; the sequence is KKRLQV. Residues 293-313 traverse the membrane as a helical segment; that stretch reads ALSTGLVFFWYELFCNFFHHM.

Belongs to the mitochondrial carrier (TC 2.A.29) family.

It localises to the mitochondrion membrane. It catalyses the reaction thiamine phosphate(out) + thiamine diphosphate(in) = thiamine phosphate(in) + thiamine diphosphate(out). Its function is as follows. Mitochondrial transporter mediating uptake of thiamine diphosphate into mitochondria. It is not clear if the antiporter activity is affected by the membrane potential or by the proton electrochemical gradient. The chain is Mitochondrial thiamine pyrophosphate carrier (SLC25A19) from Bos taurus (Bovine).